The primary structure comprises 568 residues: Glucose-6-phosphate isomerase, cytosolic 1 (568 aa).

Catalysis depends on glutamate 360, which acts as the Proton donor. Residues histidine 391 and lysine 516 contribute to the active site.

It belongs to the GPI family. As to quaternary structure, homodimer.

The protein resides in the cytoplasm. It catalyses the reaction alpha-D-glucose 6-phosphate = beta-D-fructose 6-phosphate. It functions in the pathway carbohydrate degradation; glycolysis; D-glyceraldehyde 3-phosphate and glycerone phosphate from D-glucose: step 2/4. This chain is Glucose-6-phosphate isomerase, cytosolic 1 (PGIC1), found in Clarkia mildrediae.